A 307-amino-acid polypeptide reads, in one-letter code: Homoserine O-acetyltransferase (307 aa).

The active-site Acyl-thioester intermediate is Cys-142. Residues Lys-163 and Ser-192 each contribute to the substrate site. The active-site Proton acceptor is the His-235. Glu-237 is a catalytic residue. Arg-249 is a binding site for substrate.

Belongs to the MetA family.

It localises to the cytoplasm. It catalyses the reaction L-homoserine + acetyl-CoA = O-acetyl-L-homoserine + CoA. It functions in the pathway amino-acid biosynthesis; L-methionine biosynthesis via de novo pathway; O-acetyl-L-homoserine from L-homoserine: step 1/1. Transfers an acetyl group from acetyl-CoA to L-homoserine, forming acetyl-L-homoserine. In Desulfitobacterium hafniense (strain Y51), this protein is Homoserine O-acetyltransferase.